A 301-amino-acid polypeptide reads, in one-letter code: Pseudouridine-5'-phosphate glycosidase (301 aa).

The active-site Proton donor is Glu-23. Positions 84 and 104 each coordinate substrate. Asp-136 contributes to the Mn(2+) binding site. Residue 138–140 (SRD) participates in substrate binding. The active-site Nucleophile is the Lys-157.

It belongs to the pseudouridine-5'-phosphate glycosidase family. Homotrimer. The cofactor is Mn(2+).

The catalysed reaction is D-ribose 5-phosphate + uracil = psi-UMP + H2O. Functionally, catalyzes the reversible cleavage of pseudouridine 5'-phosphate (PsiMP) to ribose 5-phosphate and uracil. Functions biologically in the cleavage direction, as part of a pseudouridine degradation pathway. The chain is Pseudouridine-5'-phosphate glycosidase from Mycoplasmopsis agalactiae (strain NCTC 10123 / CIP 59.7 / PG2) (Mycoplasma agalactiae).